Consider the following 182-residue polypeptide: UPF0200 protein Mboo_1593 (182 aa).

An ATP-binding site is contributed by 8 to 15 (GLPASGKG).

It belongs to the UPF0200 family.

The sequence is that of UPF0200 protein Mboo_1593 from Methanoregula boonei (strain DSM 21154 / JCM 14090 / 6A8).